We begin with the raw amino-acid sequence, 927 residues long: E3 ubiquitin-protein ligase HOS1 (927 aa).

An RING-type; degenerate zinc finger spans residues 53 to 93; that stretch reads CRATRDLASCGRFVNYVLNPCGHASLCTECCQRCDVCPICR. 3 disordered regions span residues 678 to 699, 782 to 806, and 832 to 927; these read SGQF…LPDA, FKDL…SPEV, and VKSS…FAAR. Residues 797-806 are compositionally biased toward basic and acidic residues; it reads KRTEESSPEV. 2 stretches are compositionally biased toward polar residues: residues 832-851 and 878-892; these read VKSS…STFF and NNNN…NNSG. The span at 917–927 shows a compositional bias: basic residues; the sequence is KGRRRRRFAAR.

Interacts with SCRM/ICE1, FLK and MSI4/FVE. In terms of tissue distribution, ubiquitously expressed with higher levels in leaf vasculature, roots and root tips.

The protein localises to the nucleus. It is found in the cytoplasm. It carries out the reaction S-ubiquitinyl-[E2 ubiquitin-conjugating enzyme]-L-cysteine + [acceptor protein]-L-lysine = [E2 ubiquitin-conjugating enzyme]-L-cysteine + N(6)-ubiquitinyl-[acceptor protein]-L-lysine.. It participates in protein modification; protein ubiquitination. In terms of biological role, E3 ubiquitin-protein ligase that mediates ubiquitination and subsequent proteasomal degradation of the transcription factor ICE1. Acts as a negative regulator of cold signaling pathways. Probably involved in recruiting the NUP107-160 subcomplex of the nuclear pore complex to chromatin. Controls flowering time in response to ambient temperatures (16 and 23 degrees Celsius) and intermittent cold, probably via the regulation of FT and TSF levels. In Arabidopsis thaliana (Mouse-ear cress), this protein is E3 ubiquitin-protein ligase HOS1 (HOS1).